We begin with the raw amino-acid sequence, 293 residues long: TBC1 domain family member 7 (293 aa).

One can recognise a Rab-GAP TBC domain in the interval 50-231; that stretch reads PLPSMYRALV…RVWDKVVSGS (182 aa).

Component of the TSC-TBC complex (also named Rhebulator complex), composed of 2 molecules of TSC1, 2 molecules of TSC2 and 1 molecule of TBC1D7. Interacts with TSC1 (via C-terminal half of the coiled-coil domain). In terms of tissue distribution, highly expressed in heart, and slightly in kidney, liver and placenta.

It localises to the lysosome membrane. Its subcellular location is the cytoplasmic vesicle. The protein localises to the cytoplasm. The protein resides in the cytosol. Its function is as follows. Non-catalytic component of the TSC-TBC complex, a multiprotein complex that acts as a negative regulator of the canonical mTORC1 complex, an evolutionarily conserved central nutrient sensor that stimulates anabolic reactions and macromolecule biosynthesis to promote cellular biomass generation and growth. The TSC-TBC complex acts as a GTPase-activating protein (GAP) for the small GTPase RHEB, a direct activator of the protein kinase activity of mTORC1. In absence of nutrients, the TSC-TBC complex inhibits mTORC1, thereby preventing phosphorylation of ribosomal protein S6 kinase (RPS6KB1 and RPS6KB2) and EIF4EBP1 (4E-BP1) by the mTORC1 signaling. The TSC-TBC complex is inactivated in response to nutrients, relieving inhibition of mTORC1. The chain is TBC1 domain family member 7 from Homo sapiens (Human).